A 72-amino-acid polypeptide reads, in one-letter code: Antimicrobial peptide MeuNaTxbeta-4 (72 aa).

Positions 1–5 (LIGVK) are cleaved as a signal peptide. The region spanning 7–69 (EHGYLLDKYT…LWHYETNKCN (63 aa)) is the LCN-type CS-alpha/beta domain. 4 cysteine pairs are disulfide-bonded: Cys18-Cys68, Cys22-Cys43, Cys29-Cys50, and Cys33-Cys52.

As to expression, expressed by the venom gland.

It localises to the secreted. In terms of biological role, antimicrobial peptide with weak activity against both Gram-positive and -negative bacteria. Its antibiotic activity is potentiated by other antibacterial peptides such as Meucin-49. The sequence is that of Antimicrobial peptide MeuNaTxbeta-4 from Mesobuthus eupeus (Lesser Asian scorpion).